Consider the following 372-residue polypeptide: Ketol-acid reductoisomerase (NADP(+)) (372 aa).

Residues Met1–Asp25 are disordered. A compositionally biased stretch (acidic residues) spans Thr10 to Asp19. In terms of domain architecture, KARI N-terminal Rossmann spans Leu24 to Thr205. NADP(+) is bound by residues Tyr49–Gln52, Ser75, Ser77, and Asp107–Gln110. His131 is a catalytic residue. Position 157 (Gly157) interacts with NADP(+). Residues Thr206 to Ser351 form the KARI C-terminal knotted domain. Mg(2+) contacts are provided by Asp214, Glu218, Glu250, and Glu254. Ser275 is a substrate binding site. The interval Ser351 to Asp372 is disordered. Residues Asp352–Asp372 are compositionally biased toward acidic residues.

It belongs to the ketol-acid reductoisomerase family. Requires Mg(2+) as cofactor.

It carries out the reaction (2R)-2,3-dihydroxy-3-methylbutanoate + NADP(+) = (2S)-2-acetolactate + NADPH + H(+). It catalyses the reaction (2R,3R)-2,3-dihydroxy-3-methylpentanoate + NADP(+) = (S)-2-ethyl-2-hydroxy-3-oxobutanoate + NADPH + H(+). It functions in the pathway amino-acid biosynthesis; L-isoleucine biosynthesis; L-isoleucine from 2-oxobutanoate: step 2/4. It participates in amino-acid biosynthesis; L-valine biosynthesis; L-valine from pyruvate: step 2/4. In terms of biological role, involved in the biosynthesis of branched-chain amino acids (BCAA). Catalyzes an alkyl-migration followed by a ketol-acid reduction of (S)-2-acetolactate (S2AL) to yield (R)-2,3-dihydroxy-isovalerate. In the isomerase reaction, S2AL is rearranged via a Mg-dependent methyl migration to produce 3-hydroxy-3-methyl-2-ketobutyrate (HMKB). In the reductase reaction, this 2-ketoacid undergoes a metal-dependent reduction by NADPH to yield (R)-2,3-dihydroxy-isovalerate. The sequence is that of Ketol-acid reductoisomerase (NADP(+)) from Haloquadratum walsbyi (strain DSM 16790 / HBSQ001).